A 217-amino-acid polypeptide reads, in one-letter code: Non-structural protein NS3 (217 aa).

It belongs to the orbivirus NS3 family.

Functionally, may play a role in the release of virions from infected cells. The polypeptide is Non-structural protein NS3 (Segment-10) (Camelus dromedarius (Dromedary)).